We begin with the raw amino-acid sequence, 76 residues long: Small ribosomal subunit protein eS17 (76 aa).

Belongs to the eukaryotic ribosomal protein eS17 family.

The polypeptide is Small ribosomal subunit protein eS17 (Metallosphaera sedula (strain ATCC 51363 / DSM 5348 / JCM 9185 / NBRC 15509 / TH2)).